Reading from the N-terminus, the 541-residue chain is MAKDIKYSADARVAMEAGVNKLANTVRVTLGPKGRNVVLDKSFGAPLITNDGVTIAKEIELEDSFENMGAQLVKEVATKTNDVAGDGTTTATVLAQAMINEGMKNLAAGANPIILRRGMKKATDCAVEAISSMSSAINGKDQIAKVAAISAGDDSVGEMVADAMDKVSKDGVITIEESKTMQTELDLVEGMQFDRGYVSAYMATDMDKMEANLDNPYILITDKKISNIQEILPVLEQIVQSGSRLLIIAEDIEGEALTTLVINKLRGTFTVVGVKAPGYGDRRKAMLQDIAILTGGTVISDELGLDLKEATLDQLGRAKSVKIQKENTIIVDGEGNKAEIEARISQIKAQIAETTSEFDKEKLQERLAKLAGGVAVIRVGAATETEMKEKKLRMEDALAATRAAVEEGIIAGGGSAYIHASKEVAKLAAKLEGDERTGAQIILKALEAPLSCIAQNAGLEGAVIVNKVREKKTGVGFNALTEKYVDMVEDGILDPSKVTRSALQNATSVASTFLTTEAAVASIKEPAPAMPAGGPGGMGMM.

Residues 29-32 (TLGP), 86-90 (DGTTT), glycine 413, 478-480 (NAL), and aspartate 494 contribute to the ATP site.

It belongs to the chaperonin (HSP60) family. As to quaternary structure, forms a cylinder of 14 subunits composed of two heptameric rings stacked back-to-back. Interacts with the co-chaperonin GroES.

It is found in the cytoplasm. It catalyses the reaction ATP + H2O + a folded polypeptide = ADP + phosphate + an unfolded polypeptide.. Together with its co-chaperonin GroES, plays an essential role in assisting protein folding. The GroEL-GroES system forms a nano-cage that allows encapsulation of the non-native substrate proteins and provides a physical environment optimized to promote and accelerate protein folding. In Lachnoclostridium phytofermentans (strain ATCC 700394 / DSM 18823 / ISDg) (Clostridium phytofermentans), this protein is Chaperonin GroEL.